The following is a 946-amino-acid chain: Probable inactive ATP-dependent zinc metalloprotease FTSHI 1, chloroplastic (946 aa).

The N-terminal 54 residues, 1–54 (MASIDNVFSLGTRFSIPENPKRSILKHATTSSFSARTQTRWRAPILRRSFTVLC), are a transit peptide targeting the chloroplast. The next 3 membrane-spanning stretches (helical) occupy residues 289–309 (AVIA…VFAV), 320–340 (VVWP…LGVL), and 369–389 (VASS…MVLL). ATP is bound at residue 470–477 (GPPGCGKT).

The protein in the N-terminal section; belongs to the AAA ATPase family. This sequence in the C-terminal section; belongs to the peptidase M41 family. Oligomer.

Its subcellular location is the plastid. The protein localises to the chloroplast inner membrane. Functions in chloroplast biogenesis and chloroplast division. Required for plastid development during embryogenesis. Might be involved in chaperone functions or play a structural role in the thylakoid FtsH complex. The polypeptide is Probable inactive ATP-dependent zinc metalloprotease FTSHI 1, chloroplastic (Arabidopsis thaliana (Mouse-ear cress)).